The following is a 408-amino-acid chain: MAEVKLISAESVTEGHPDKICDQISDAILDDMLRQDPHSHVAVETSATKGQFWVFGEVTSKGYSDIQSIVRDTVRRIGYTSSVIGLDADSCGVLVSLSEQSPEINQGVSRIDSDRENAVSREERYEAQGAGDQGVMFGYASDETDVLMPLPIHLAHRLAYRLAEVRKNGEVKFLRPDGKTQVTIEYDEENRPLRVDTVLISTQHDPEVSQEALREDLREHVIEPVLDEVLGDAVKHDDYRVLVNPTGSFIMGGPAADAGLTGRKIIVDTYGGAAHHGGGAFSGKDPSKVDRSAAYAARWVAKNIVAAGLAHKVEVQVAYAIGVAEPVSINVETYGTEADGVTREQIQEAVRKVFDLRPAAIVDELDLLRPIYSKTAAYGHFGREDDDFTWEHTNKVDELKRAIATLVD.

His16 lines the ATP pocket. A Mg(2+)-binding site is contributed by Asp18. A K(+)-binding site is contributed by Glu44. Glu57 and Gln100 together coordinate L-methionine. The segment at 100–110 is flexible loop; it reads QSPEINQGVSR. Residues 177–179, Asp257, 263–264, Ala280, and Lys284 contribute to the ATP site; these read DGK and RK. Position 257 (Asp257) interacts with L-methionine. Lys288 is a binding site for L-methionine.

The protein belongs to the AdoMet synthase family. As to quaternary structure, homotetramer; dimer of dimers. Mg(2+) is required as a cofactor. Requires K(+) as cofactor.

It localises to the cytoplasm. The catalysed reaction is L-methionine + ATP + H2O = S-adenosyl-L-methionine + phosphate + diphosphate. Its pathway is amino-acid biosynthesis; S-adenosyl-L-methionine biosynthesis; S-adenosyl-L-methionine from L-methionine: step 1/1. Its function is as follows. Catalyzes the formation of S-adenosylmethionine (AdoMet) from methionine and ATP. The overall synthetic reaction is composed of two sequential steps, AdoMet formation and the subsequent tripolyphosphate hydrolysis which occurs prior to release of AdoMet from the enzyme. The chain is S-adenosylmethionine synthase from Bifidobacterium animalis subsp. lactis (strain AD011).